Consider the following 782-residue polypeptide: Coiled-coil alpha-helical rod protein 1 (782 aa).

2 stretches are compositionally biased toward basic and acidic residues: residues 62–74 (ERDV…EPGR) and 208–218 (ETRRAGEAKEL). 2 disordered regions span residues 62–82 (ERDV…WGLE) and 182–218 (LTQA…AKEL). 3 coiled-coil regions span residues 82–314 (EGSQ…ELTR), 344–437 (LMVQ…NAVS), and 498–691 (VADV…QQEG).

It is found in the cytoplasm. Its subcellular location is the nucleus. In terms of biological role, may be a regulator of keratinocyte proliferation or differentiation. The sequence is that of Coiled-coil alpha-helical rod protein 1 (CCHCR1) from Pan paniscus (Pygmy chimpanzee).